The primary structure comprises 886 residues: Valine--tRNA ligase (886 aa).

The 'HIGH' region signature appears at Pro-53–His-63. The short motif at Lys-540–Ser-544 is the 'KMSKS' region element. Lys-543 lines the ATP pocket. A coiled-coil region spans residues Thr-819–Asp-851.

The protein belongs to the class-I aminoacyl-tRNA synthetase family. ValS type 1 subfamily. As to quaternary structure, monomer.

It localises to the cytoplasm. The catalysed reaction is tRNA(Val) + L-valine + ATP = L-valyl-tRNA(Val) + AMP + diphosphate. In terms of biological role, catalyzes the attachment of valine to tRNA(Val). As ValRS can inadvertently accommodate and process structurally similar amino acids such as threonine, to avoid such errors, it has a 'posttransfer' editing activity that hydrolyzes mischarged Thr-tRNA(Val) in a tRNA-dependent manner. This chain is Valine--tRNA ligase, found in Mycobacterium tuberculosis (strain CDC 1551 / Oshkosh).